The chain runs to 127 residues: UPF0102 protein Paes_0016 (127 aa).

It belongs to the UPF0102 family.

The chain is UPF0102 protein Paes_0016 from Prosthecochloris aestuarii (strain DSM 271 / SK 413).